The sequence spans 259 residues: 5'-nucleotidase SurE (259 aa).

Residues Asp8, Asp9, Ser40, and Asn92 each coordinate a divalent metal cation.

It belongs to the SurE nucleotidase family. The cofactor is a divalent metal cation.

It is found in the cytoplasm. It catalyses the reaction a ribonucleoside 5'-phosphate + H2O = a ribonucleoside + phosphate. Functionally, nucleotidase that shows phosphatase activity on nucleoside 5'-monophosphates. The chain is 5'-nucleotidase SurE from Xanthomonas oryzae pv. oryzae (strain MAFF 311018).